Consider the following 155-residue polypeptide: Methylated-DNA--protein-cysteine methyltransferase (155 aa).

The active-site Nucleophile; methyl group acceptor is Cys119.

It belongs to the MGMT family.

The protein localises to the cytoplasm. It carries out the reaction a 6-O-methyl-2'-deoxyguanosine in DNA + L-cysteinyl-[protein] = S-methyl-L-cysteinyl-[protein] + a 2'-deoxyguanosine in DNA. The enzyme catalyses a 4-O-methyl-thymidine in DNA + L-cysteinyl-[protein] = a thymidine in DNA + S-methyl-L-cysteinyl-[protein]. Functionally, involved in the cellular defense against the biological effects of O6-methylguanine (O6-MeG) and O4-methylthymine (O4-MeT) in DNA. Repairs the methylated nucleobase in DNA by stoichiometrically transferring the methyl group to a cysteine residue in the enzyme. This is a suicide reaction: the enzyme is irreversibly inactivated. The chain is Methylated-DNA--protein-cysteine methyltransferase from Sulfolobus acidocaldarius (strain ATCC 33909 / DSM 639 / JCM 8929 / NBRC 15157 / NCIMB 11770).